We begin with the raw amino-acid sequence, 235 residues long: Probable septum site-determining protein MinC (235 aa).

The tract at residues 104–125 is disordered; that stretch reads KAVRPAPVEPATPSEPPQNANP. Pro residues predominate over residues 110-119; it reads PVEPATPSEP.

Belongs to the MinC family. In terms of assembly, interacts with MinD and FtsZ.

Its function is as follows. Cell division inhibitor that blocks the formation of polar Z ring septums. Rapidly oscillates between the poles of the cell to destabilize FtsZ filaments that have formed before they mature into polar Z rings. Prevents FtsZ polymerization. The polypeptide is Probable septum site-determining protein MinC (Salmonella agona (strain SL483)).